The following is a 1143-amino-acid chain: Condensin-2 complex subunit G2 (1143 aa).

The residue at position 30 (Ser-30) is a Phosphoserine. Residues 460–498 (LLPALRYSLHDNSEKVRVAFVDMLLKIKAVRAAKFWKIC) form an HEAT repeat. Thr-805 and Thr-1119 each carry phosphothreonine.

As to quaternary structure, component of the condensin-2 complex, which contains the SMC2 and SMC4 heterodimer, and 3 non SMC subunits that probably regulate the complex: NCAPH2, NCAPD3 and NCAPG2.

The protein localises to the nucleus. Regulatory subunit of the condensin-2 complex, a complex which establishes mitotic chromosome architecture and is involved in physical rigidity of the chromatid axis. The polypeptide is Condensin-2 complex subunit G2 (NCAPG2) (Homo sapiens (Human)).